A 1381-amino-acid chain; its full sequence is Hepatocyte growth factor receptor (1381 aa).

The N-terminal stretch at methionine 1 to glycine 24 is a signal peptide. Over glutamate 25–threonine 932 the chain is Extracellular. Residues lysine 27–leucine 515 enclose the Sema domain. N-linked (GlcNAc...) asparagine glycosylation is present at asparagine 45. Disulfide bonds link cysteine 95–cysteine 101, cysteine 98–cysteine 160, cysteine 133–cysteine 141, and cysteine 172–cysteine 175. Asparagine 106 carries an N-linked (GlcNAc...) asparagine glycan. Residue asparagine 149 is glycosylated (N-linked (GlcNAc...) asparagine). Asparagine 202 carries N-linked (GlcNAc...) asparagine glycosylation. 2 disulfide bridges follow: cysteine 298–cysteine 363 and cysteine 385–cysteine 397. N-linked (GlcNAc...) asparagine glycosylation is present at asparagine 399. Intrachain disulfides connect cysteine 520/cysteine 538, cysteine 526/cysteine 561, cysteine 529/cysteine 545, and cysteine 541/cysteine 551. IPT/TIG domains are found at residues proline 563–valine 655, proline 657–arginine 739, and proline 742–valine 836. Threonine 582 carries an O-linked (Man) threonine glycan. Asparagine 607 and asparagine 635 each carry an N-linked (GlcNAc...) asparagine glycan. O-linked (Man) threonine glycans are attached at residues threonine 676 and threonine 761. N-linked (GlcNAc...) asparagine glycosylation is found at asparagine 785, asparagine 879, and asparagine 930. The chain crosses the membrane as a helical span at residues glycine 933–leucine 955. Topologically, residues lysine 956–threonine 1381 are cytoplasmic. Serine 966 carries the post-translational modification Phosphoserine. The residue at position 977 (threonine 977) is a Phosphothreonine. A phosphoserine mark is found at serine 990, serine 997, and serine 1000. Position 1003 is a phosphotyrosine (tyrosine 1003). The 268-residue stretch at valine 1078–isoleucine 1345 folds into the Protein kinase domain. Residues isoleucine 1084–valine 1092 and lysine 1110 contribute to the ATP site. The active-site Proton acceptor is aspartate 1204. An interaction with RANBP9 region spans residues leucine 1212–threonine 1381. Residue tyrosine 1230 is modified to Phosphotyrosine. A phosphotyrosine; by autocatalysis mark is found at tyrosine 1234 and tyrosine 1235. At threonine 1289 the chain carries Phosphothreonine. The interval tryptophan 1320–valine 1359 is interaction with MUC20. Phosphotyrosine; by autocatalysis occurs at positions 1349 and 1356. Tyrosine 1365 is subject to Phosphotyrosine.

It belongs to the protein kinase superfamily. Tyr protein kinase family. Heterodimer made of an alpha chain (50 kDa) and a beta chain (145 kDa) which are disulfide linked. Binds PLXNB1. Interacts when phosphorylated with downstream effectors including STAT3, PIK3R1, SRC, PCLG1, GRB2 and GAB1. Interacts with SPSB1, SPSB2 and SPSB4. Interacts with INPP5D/SHIP1. When phosphorylated at Tyr-1356, interacts with INPPL1/SHIP2. Interacts with RANBP9 and RANBP10, as well as SPSB1, SPSB2, SPSB3 and SPSB4. SPSB1 binding occurs in the presence and in the absence of HGF, however HGF treatment has a positive effect on this interaction. Interacts with MUC20; prevents interaction with GRB2 and suppresses hepatocyte growth factor-induced cell proliferation. Interacts with GRB10. Interacts with PTPN1 and PTPN2. Interacts with tensin TNS3. Interacts (when phosphorylated) with tensin TNS4 (via SH2 domain); the interaction increases MET protein stability by inhibiting MET endocytosis and subsequent lysosomal degradation. Post-translationally, autophosphorylated in response to ligand binding on Tyr-1234 and Tyr-1235 in the kinase domain leading to further phosphorylation of Tyr-1349 and Tyr-1356 in the C-terminal multifunctional docking site. Dephosphorylated by PTPRJ at Tyr-1349 and Tyr-1365. Dephosphorylated by PTPN1 and PTPN2. Ubiquitinated. Ubiquitination by CBL regulates the receptor stability and activity through proteasomal degradation. In terms of processing, O-mannosylation of IPT/TIG domains by TMEM260 is required for protein maturation. O-mannosylated residues are composed of single mannose glycans that are not elongated or modified.

It localises to the membrane. It carries out the reaction L-tyrosyl-[protein] + ATP = O-phospho-L-tyrosyl-[protein] + ADP + H(+). With respect to regulation, in its inactive state, the C-terminal tail interacts with the catalytic domain and inhibits the kinase activity. Upon ligand binding, the C-terminal tail is displaced and becomes phosphorylated, thus increasing the kinase activity. Functionally, receptor tyrosine kinase that transduces signals from the extracellular matrix into the cytoplasm by binding to hepatocyte growth factor/HGF ligand. Regulates many physiological processes including proliferation, scattering, morphogenesis and survival. Ligand binding at the cell surface induces autophosphorylation of MET on its intracellular domain that provides docking sites for downstream signaling molecules. Following activation by ligand, interacts with the PI3-kinase subunit PIK3R1, PLCG1, SRC, GRB2, STAT3 or the adapter GAB1. Recruitment of these downstream effectors by MET leads to the activation of several signaling cascades including the RAS-ERK, PI3 kinase-AKT, or PLCgamma-PKC. The RAS-ERK activation is associated with the morphogenetic effects while PI3K/AKT coordinates prosurvival effects. During embryonic development, MET signaling plays a role in gastrulation, development and migration of muscles and neuronal precursors, angiogenesis and kidney formation. In adults, participates in wound healing as well as organ regeneration and tissue remodeling. Also promotes differentiation and proliferation of hematopoietic cells. This Ateles geoffroyi (Black-handed spider monkey) protein is Hepatocyte growth factor receptor (MET).